We begin with the raw amino-acid sequence, 351 residues long: MTVDRLTSRSRAAGUAAKIAPGDLERILATLPRDPREGERVVVGTRDNEDAAIVRVPGGKAIVQTLDFFTPIVDDPYLFGQIAAANALSDVYAMGGEPWCALNIVCFPVKELPEEILADILRGGADKVREAGAVLVGGHSIEDESIKYGLSVTGIIDPDCYATNTGLRPGDVLLLTKPLGSGVLATAVKAGWDGFEAHEQELGRWGAMLNRAGGRVIRELGLAAATDVTGFGLGGHLLEMANASNMSVHVDVSTLPLMPAVLDLVATGLLPAGSHANRHFCSGNVSVHPEVDSLLVDIVFDAQTSGGLILAVPPHLVDDACSILRAEDAPFWRIGHVEEMGEGVSRLVLQP.

The active site involves U15. U15 is a non-standard amino acid (selenocysteine). ATP-binding positions include K18 and 47-49; that span reads DNE. D50 is a binding site for Mg(2+). ATP is bound by residues D67, D90, and 138–140; that span reads GHS. D90 is a Mg(2+) binding site. A Mg(2+)-binding site is contributed by D227.

This sequence belongs to the selenophosphate synthase 1 family. Class I subfamily. As to quaternary structure, homodimer. Requires Mg(2+) as cofactor.

The catalysed reaction is hydrogenselenide + ATP + H2O = selenophosphate + AMP + phosphate + 2 H(+). In terms of biological role, synthesizes selenophosphate from selenide and ATP. The protein is Selenide, water dikinase of Nitratidesulfovibrio vulgaris (strain DP4) (Desulfovibrio vulgaris).